A 352-amino-acid polypeptide reads, in one-letter code: Protein RecA (352 aa).

ATP is bound at residue 65–72 (GPESSGKT).

Belongs to the RecA family.

It is found in the cytoplasm. Can catalyze the hydrolysis of ATP in the presence of single-stranded DNA, the ATP-dependent uptake of single-stranded DNA by duplex DNA, and the ATP-dependent hybridization of homologous single-stranded DNAs. It interacts with LexA causing its activation and leading to its autocatalytic cleavage. Plays a functional role in the DNA rearrangement associated with the phenotypic switching from a pathogenic smooth to a nonpathogenic rough form in this bacterium. The sequence is that of Protein RecA from Pseudomonas tolaasii.